We begin with the raw amino-acid sequence, 85 residues long: NAD(P)H-quinone oxidoreductase subunit O (85 aa).

This sequence belongs to the complex I NdhO subunit family. As to quaternary structure, NDH-1 can be composed of about 15 different subunits; different subcomplexes with different compositions have been identified which probably have different functions.

The protein resides in the cellular thylakoid membrane. It catalyses the reaction a plastoquinone + NADH + (n+1) H(+)(in) = a plastoquinol + NAD(+) + n H(+)(out). The catalysed reaction is a plastoquinone + NADPH + (n+1) H(+)(in) = a plastoquinol + NADP(+) + n H(+)(out). Functionally, NDH-1 shuttles electrons from an unknown electron donor, via FMN and iron-sulfur (Fe-S) centers, to quinones in the respiratory and/or the photosynthetic chain. The immediate electron acceptor for the enzyme in this species is believed to be plastoquinone. Couples the redox reaction to proton translocation, and thus conserves the redox energy in a proton gradient. Cyanobacterial NDH-1 also plays a role in inorganic carbon-concentration. The sequence is that of NAD(P)H-quinone oxidoreductase subunit O from Synechococcus sp. (strain CC9311).